The sequence spans 515 residues: Lysosomal acid glucosylceramidase (515 aa).

Residues 1-19 (MAARLIGFFLFQAVSWAYG) form the signal peptide. 2 cysteine pairs are disulfide-bonded: Cys23–Cys35 and Cys37–Cys42. Residues Asn38 and Asn78 are each glycosylated (N-linked (GlcNAc...) asparagine). N-linked (GlcNAc...) (high mannose) asparagine glycosylation occurs at Asn165. Glu254 serves as the catalytic Proton donor. An N-linked (GlcNAc...) asparagine glycan is attached at Asn289. Residue Glu358 is the Nucleophile of the active site. N-linked (GlcNAc...) asparagine glycosylation is present at Asn480.

It belongs to the glycosyl hydrolase 30 family. Interacts with saposin-C. Interacts with SCARB2. Interacts with TCP1. Interacts with GRN; this interaction prevents aggregation of GBA1-SCARB2 complex via interaction with HSPA1A upon stress.

The protein localises to the lysosome membrane. It catalyses the reaction a beta-D-glucosyl-(1&lt;-&gt;1')-N-acylsphing-4-enine + H2O = an N-acylsphing-4-enine + D-glucose. The enzyme catalyses a beta-D-galactosyl-(1&lt;-&gt;1')-N-acylsphing-4-enine + H2O = an N-acylsphing-4-enine + D-galactose. The catalysed reaction is cholesteryl 3-beta-D-glucoside + H2O = cholesterol + D-glucose. It carries out the reaction a beta-D-glucosyl-(1&lt;-&gt;1')-N-acylsphing-4-enine + cholesterol = cholesteryl 3-beta-D-glucoside + an N-acylsphing-4-enine. It catalyses the reaction beta-D-glucosyl-(1&lt;-&gt;1')-N-hexadecanoylsphing-4-enine + cholesterol = cholesteryl 3-beta-D-glucoside + N-hexadecanoylsphing-4-enine. The enzyme catalyses beta-D-glucosyl-N-(9Z-octadecenoyl)-sphing-4E-enine + cholesterol = N-(9Z-octadecenoyl)-sphing-4-enine + cholesteryl 3-beta-D-glucoside. The catalysed reaction is beta-D-glucosyl-N-octanoylsphing-4E-enine + cholesterol = N-octanoylsphing-4-enine + cholesteryl 3-beta-D-glucoside. It carries out the reaction beta-D-glucosyl-N-dodecanoylsphing-4-enine + cholesterol = N-dodecanoylsphing-4-enine + cholesteryl 3-beta-D-glucoside. It catalyses the reaction beta-D-glucosyl-(1&lt;-&gt;1)-N-octadecanoylsphing-4-enine + cholesterol = N-octadecanoylsphing-4-enine + cholesteryl 3-beta-D-glucoside. The enzyme catalyses beta-D-glucosyl-(1&lt;-&gt;1')-N-(15Z-tetracosenoyl)-sphing-4-enine + cholesterol = N-(15Z-tetracosenoyl)-sphing-4-enine + cholesteryl 3-beta-D-glucoside. The catalysed reaction is a beta-D-galactosyl-(1&lt;-&gt;1')-N-acylsphing-4-enine + cholesterol = cholesteryl 3-beta-D-galactoside + an N-acylsphing-4-enine. It carries out the reaction 1-(beta-D-galactosyl)-N-dodecanoylsphing-4-enine + cholesterol = cholesteryl 3-beta-D-galactoside + N-dodecanoylsphing-4-enine. It catalyses the reaction a beta-D-xylosyl-(1&lt;-&gt;1')-N-acylsphing-4-enine + cholesterol = cholesteryl 3-beta-D-xyloside + an N-acylsphing-4-enine. The enzyme catalyses beta-D-xylosyl-(1&lt;-&gt;1')-N-(9Z-octadecenoyl)-sphing-4-enine + cholesterol = cholesteryl 3-beta-D-xyloside + N-(9Z-octadecenoyl)-sphing-4-enine. It functions in the pathway steroid metabolism; cholesterol metabolism. It participates in sphingolipid metabolism. With respect to regulation, inhibited by conduritol B epoxide/CBE. In terms of biological role, glucosylceramidase that catalyzes, within the lysosomal compartment, the hydrolysis of glucosylceramides/GlcCers (such as beta-D-glucosyl-(1&lt;-&gt;1')-N-acylsphing-4-enine) into free ceramides (such as N-acylsphing-4-enine) and glucose. Plays a central role in the degradation of complex lipids and the turnover of cellular membranes. Through the production of ceramides, participates in the PKC-activated salvage pathway of ceramide formation. Catalyzes the glucosylation of cholesterol, through a transglucosylation reaction where glucose is transferred from GlcCer to cholesterol. GlcCer containing mono-unsaturated fatty acids (such as beta-D-glucosyl-N-(9Z-octadecenoyl)-sphing-4-enine) are preferred as glucose donors for cholesterol glucosylation when compared with GlcCer containing same chain length of saturated fatty acids (such as beta-D-glucosyl-N-octadecanoyl-sphing-4-enine). Under specific conditions, may alternatively catalyze the reverse reaction, transferring glucose from cholesteryl 3-beta-D-glucoside to ceramide. Can also hydrolyze cholesteryl 3-beta-D-glucoside producing glucose and cholesterol. Catalyzes the hydrolysis of galactosylceramides/GalCers (such as beta-D-galactosyl-(1&lt;-&gt;1')-N-acylsphing-4-enine), as well as the transfer of galactose between GalCers and cholesterol in vitro, but with lower activity than with GlcCers. Contrary to GlcCer and GalCer, xylosylceramide/XylCer (such as beta-D-xyosyl-(1&lt;-&gt;1')-N-acylsphing-4-enine) is not a good substrate for hydrolysis, however it is a good xylose donor for transxylosylation activity to form cholesteryl 3-beta-D-xyloside. This chain is Lysosomal acid glucosylceramidase (Gba1), found in Mus musculus (Mouse).